Consider the following 746-residue polypeptide: Polyribonucleotide nucleotidyltransferase (746 aa).

Mg(2+)-binding residues include Asp515 and Asp521. A KH domain is found at 581–640 (PRVIAVKIPVDKIGEVIGPKGKMINQIQEDTGADISIEDDGTVYIGATNGPSADAARSAI). The region spanning 652-724 (GERYLGTVVK…DRGKLSLSPV (73 aa)) is the S1 motif domain.

It belongs to the polyribonucleotide nucleotidyltransferase family. Mg(2+) is required as a cofactor.

The protein localises to the cytoplasm. It carries out the reaction RNA(n+1) + phosphate = RNA(n) + a ribonucleoside 5'-diphosphate. Its function is as follows. Involved in mRNA degradation. Catalyzes the phosphorolysis of single-stranded polyribonucleotides processively in the 3'- to 5'-direction. In Renibacterium salmoninarum (strain ATCC 33209 / DSM 20767 / JCM 11484 / NBRC 15589 / NCIMB 2235), this protein is Polyribonucleotide nucleotidyltransferase.